We begin with the raw amino-acid sequence, 257 residues long: MIGRERMTVVSQRMIAERTYELTLSGQLVAQMNEPGQFVHIKVAEAADPLLRRPLSLCQIDHKQGQCIIIYRQEGKGTALLTQKQPGDRVDVLGPLGHGFPLDAAPAGGRALLVGGGIGVPPLYELAKQLANRGVNVVSVLGFATKAAVFYEAEFAAFGETYIATDDGSYGMAGRVTDVIEQQGLSFDVLYACGPKPMLKALDERFRGRPVYLSLEERMGCGVGACFACVCHVPGSETAYKKVCSDGPVFRAGEVVL.

Residues 2–102 (IGRERMTVVS…LGPLGHGFPL (101 aa)) form the FAD-binding FR-type domain. Residues 53-56 (RPLS), 70-72 (IYR), and 77-78 (GT) contribute to the FAD site. C221, C226, C229, and C244 together coordinate [2Fe-2S] cluster.

This sequence belongs to the PyrK family. Heterotetramer of 2 PyrK and 2 PyrD type B subunits. Requires [2Fe-2S] cluster as cofactor. The cofactor is FAD.

It functions in the pathway pyrimidine metabolism; UMP biosynthesis via de novo pathway; orotate from (S)-dihydroorotate (NAD(+) route): step 1/1. Functionally, responsible for channeling the electrons from the oxidation of dihydroorotate from the FMN redox center in the PyrD type B subunit to the ultimate electron acceptor NAD(+). The chain is Dihydroorotate dehydrogenase B (NAD(+)), electron transfer subunit from Geobacillus thermodenitrificans (strain NG80-2).